The sequence spans 438 residues: Coiled-coil domain-containing protein 78 (438 aa).

Coiled-coil stretches lie at residues 74 to 105 (HLHE…LRGD) and 217 to 246 (SCQG…YVLR). Positions 345 to 381 (FSHREDQHGGPGALLSSPKKRPGGASQGGTSEPQGLD) are disordered.

It belongs to the CCDC78 family. Expressed primarily in skeletal muscle.

The protein localises to the cytoplasm. The protein resides in the cytoskeleton. It is found in the microtubule organizing center. Its subcellular location is the centrosome. It localises to the centriole. The protein localises to the perinuclear region. The protein resides in the cell membrane. It is found in the sarcolemma. Its subcellular location is the sarcoplasmic reticulum. In terms of biological role, component of the deuterosome, a structure that promotes de novo centriole amplification in multiciliated cells that can generate more than 100 centrioles. Deuterosome-mediated centriole amplification occurs in terminally differentiated multiciliated cells (G1/0) and not in S phase. Essential for centriole amplification and is required for CEP152 localization to the deuterosome. In Homo sapiens (Human), this protein is Coiled-coil domain-containing protein 78 (CCDC78).